The sequence spans 164 residues: Putative pre-16S rRNA nuclease (164 aa).

Belongs to the YqgF nuclease family.

The protein localises to the cytoplasm. Could be a nuclease involved in processing of the 5'-end of pre-16S rRNA. The protein is Putative pre-16S rRNA nuclease of Rhizobium etli (strain CIAT 652).